The following is a 516-amino-acid chain: Glycosyl hydrolase family 109 protein 4 (516 aa).

The first 18 residues, 1-18, serve as a signal peptide directing secretion; sequence MKKIKLLLVAGACVVLSA. C19 is lipidated: N-palmitoyl cysteine. The S-diacylglycerol cysteine moiety is linked to residue C19. Residues 76-77, D98, 146-149, 166-167, and N195 each bind NAD(+); these read MR, WLHH, and EV. Residues Y224, R247, 259–262, and Y337 each bind substrate; that span reads YATH. Residue Y259 participates in NAD(+) binding.

It belongs to the Gfo/Idh/MocA family. Glycosyl hydrolase 109 subfamily. NAD(+) is required as a cofactor.

Its subcellular location is the cell membrane. Glycosidase. This is Glycosyl hydrolase family 109 protein 4 from Phocaeicola vulgatus (strain ATCC 8482 / DSM 1447 / JCM 5826 / CCUG 4940 / NBRC 14291 / NCTC 11154) (Bacteroides vulgatus).